Reading from the N-terminus, the 138-residue chain is Membrane glycoprotein UL139 (138 aa).

Residues 1 to 15 (MLWILVLFALAASAS) form the signal peptide. Residues 17 to 37 (TTTGTSSNSSQSTSAGTTNTT) are disordered. The chain crosses the membrane as a helical span at residues 64 to 84 (GWTLSGLLLIFTCCLCCFWLV). Positions 113 to 129 (SDATLPMGTTGSYTPPQ) are enriched in polar residues. The tract at residues 113 to 138 (SDATLPMGTTGSYTPPQDGSFPPPPR) is disordered.

It is found in the host membrane. The sequence is that of Membrane glycoprotein UL139 (UL139) from Homo sapiens (Human).